We begin with the raw amino-acid sequence, 147 residues long: MSAPMVGMVVLVVTLGAAVLALSYRLWKLRQGGTAGIMRDIPAVGGHGWRHGVIRYRGEAAAFYRLSSLRLWPDRRLSRRGVEIVARRGPRGDEFDIMTDKIVVLELRDTTQDRRSGYEIALDQGALAAFLSWLESRPSPRTRRRSV.

The chain crosses the membrane as a helical span at residues alanine 3–serine 23.

The protein to M.tuberculosis Rv1312.

It is found in the membrane. This is an uncharacterized protein from Mycobacterium leprae (strain TN).